Reading from the N-terminus, the 124-residue chain is MGMSSLTRAELGALGEEVAVEHLAALGLKTLARNWRCRYGELDIIAEDAATGTVVFVEVKTRSGDGFGGLAEAVTPQKVRRIRRLAAIWLAAQDAHWAVLRIDVIGVRVGRSRDPEIVHLAGVG.

The protein belongs to the UPF0102 family.

In Mycolicibacterium smegmatis (strain ATCC 700084 / mc(2)155) (Mycobacterium smegmatis), this protein is UPF0102 protein MSMEG_2508/MSMEI_2448.